A 380-amino-acid chain; its full sequence is Cytochrome b (380 aa).

A run of 4 helical transmembrane segments spans residues 33 to 53 (FGSL…FLAM), 77 to 98 (WLIR…YLHI), 113 to 133 (WNVG…GYVL), and 178 to 198 (FFAF…IHLL). The heme b site is built by histidine 83 and histidine 97. The heme b site is built by histidine 182 and histidine 196. An a ubiquinone-binding site is contributed by histidine 201. 4 helical membrane passes run 226-246 (YKDL…ALFS), 288-308 (LGGV…PALH), 320-340 (ITQL…WIGG), and 347-367 (FIII…TLIP).

This sequence belongs to the cytochrome b family. The cytochrome bc1 complex contains 3 respiratory subunits (MT-CYB, CYC1 and UQCRFS1), 2 core proteins (UQCRC1 and UQCRC2) and probably 6 low-molecular weight proteins. Requires heme b as cofactor.

The protein localises to the mitochondrion inner membrane. Its function is as follows. Component of the ubiquinol-cytochrome c reductase complex (complex III or cytochrome b-c1 complex) that is part of the mitochondrial respiratory chain. The b-c1 complex mediates electron transfer from ubiquinol to cytochrome c. Contributes to the generation of a proton gradient across the mitochondrial membrane that is then used for ATP synthesis. This chain is Cytochrome b (mt-cyb), found in Percopsis transmontana (Sand roller).